The following is a 127-amino-acid chain: Glycine cleavage system H protein (127 aa).

A Lipoyl-binding domain is found at E22–K104. K63 is subject to N6-lipoyllysine.

It belongs to the GcvH family. As to quaternary structure, the glycine cleavage system is composed of four proteins: P, T, L and H. Requires (R)-lipoate as cofactor.

The glycine cleavage system catalyzes the degradation of glycine. The H protein shuttles the methylamine group of glycine from the P protein to the T protein. The protein is Glycine cleavage system H protein of Nitratidesulfovibrio vulgaris (strain DP4) (Desulfovibrio vulgaris).